The primary structure comprises 878 residues: Alanine--tRNA ligase (878 aa).

4 residues coordinate Zn(2+): His-567, His-571, Cys-669, and His-673.

The protein belongs to the class-II aminoacyl-tRNA synthetase family. Requires Zn(2+) as cofactor.

Its subcellular location is the cytoplasm. It catalyses the reaction tRNA(Ala) + L-alanine + ATP = L-alanyl-tRNA(Ala) + AMP + diphosphate. Functionally, catalyzes the attachment of alanine to tRNA(Ala) in a two-step reaction: alanine is first activated by ATP to form Ala-AMP and then transferred to the acceptor end of tRNA(Ala). Also edits incorrectly charged Ser-tRNA(Ala) and Gly-tRNA(Ala) via its editing domain. The chain is Alanine--tRNA ligase from Rickettsia conorii (strain ATCC VR-613 / Malish 7).